The following is a 109-amino-acid chain: Transcription initiation factor IIA subunit 2 (109 aa).

This sequence belongs to the TFIIA subunit 2 family. As to quaternary structure, TFIIA is a heterodimer of the large unprocessed subunit 1 and a small subunit gamma. It was originally believed to be a heterotrimer of an alpha (p35), a beta (p19) and a gamma subunit (p12). Interacts with NCOA6 general coactivator. TFIIA forms a complex with TBP. Interacts with HSF1 (via transactivation domain). Part of TBP-based Pol II pre-initiation complex (PIC), in which Pol II core assembles with general transcription factors and other specific initiation factors including GTF2E1, GTF2E2, GTF2F1, GTF2F2, TCEA1, ERCC2, ERCC3, GTF2H2, GTF2H3, GTF2H4, GTF2H5, GTF2A1, GTF2A2, GTF2B and TBP; this large multi-subunit PIC complex mediates DNA unwinding and targets Pol II core to the transcription start site where the first phosphodiester bond forms. In terms of assembly, (Microbial infection) Interacts with SV40 Large T antigen.

It is found in the nucleus. In terms of biological role, TFIIA is a component of the transcription machinery of RNA polymerase II and plays an important role in transcriptional activation. TFIIA in a complex with TBP mediates transcriptional activity. In Homo sapiens (Human), this protein is Transcription initiation factor IIA subunit 2 (GTF2A2).